The primary structure comprises 265 residues: MQKINFFDTINNIWRKMLDKICQLARSAGHCIMKLYNSQKFINVSYKPDNTPITDVDYAANNIIKKGLSLISPQIPIISEEESYNFEICRNWNSYWLVDPLDGTKEFLKKNGEFTVNISLIEYGVPILGVIYAPFFDVLYSAFYDNAWKEEKFGSKKKINVAQAEAPLLVISRSHPNETLKNYLEKIKCCKIKKMGSSLKFCLIAEGTAQIYPRFGDTHIWDTAAGHAIVIAAGGKVQTWTGGNLNYSLSSRVSFINSGFYASAL.

Mg(2+)-binding residues include Glu-80, Asp-99, Leu-101, Asp-102, and Asp-222. Glu-80 is a binding site for substrate. Substrate is bound by residues 101 to 104 (LDGT) and Asp-222.

The protein belongs to the inositol monophosphatase superfamily. CysQ family. The cofactor is Mg(2+).

The protein localises to the cell inner membrane. It catalyses the reaction adenosine 3',5'-bisphosphate + H2O = AMP + phosphate. Functionally, converts adenosine-3',5'-bisphosphate (PAP) to AMP. The protein is 3'(2'),5'-bisphosphate nucleotidase CysQ of Buchnera aphidicola subsp. Acyrthosiphon pisum (strain APS) (Acyrthosiphon pisum symbiotic bacterium).